A 387-amino-acid polypeptide reads, in one-letter code: Gamma-butyrobetaine dioxygenase (387 aa).

Zn(2+) is bound by residues Cys38, Cys40, Cys43, and His82. Fe cation-binding residues include His202, Asp204, and His347. Ser351 carries the post-translational modification Phosphoserine.

This sequence belongs to the gamma-BBH/TMLD family. It depends on Fe(2+) as a cofactor. Requires L-ascorbate as cofactor. As to expression, highly expressed in kidney; moderately expressed in liver; very low expression in brain.

The protein resides in the cytoplasm. It catalyses the reaction 4-(trimethylamino)butanoate + 2-oxoglutarate + O2 = carnitine + succinate + CO2. The protein operates within amine and polyamine biosynthesis; carnitine biosynthesis. Functionally, catalyzes the formation of L-carnitine from gamma-butyrobetaine. The protein is Gamma-butyrobetaine dioxygenase (BBOX1) of Homo sapiens (Human).